Reading from the N-terminus, the 169-residue chain is uncharacterized protein (169 aa).

In terms of domain architecture, HD spans 18–130 (VVEHCLAVSE…VAHADNLIFG (113 aa)).

This is an uncharacterized protein from Methanocaldococcus jannaschii (strain ATCC 43067 / DSM 2661 / JAL-1 / JCM 10045 / NBRC 100440) (Methanococcus jannaschii).